Here is a 578-residue protein sequence, read N- to C-terminus: Proline--tRNA ligase (578 aa).

It belongs to the class-II aminoacyl-tRNA synthetase family. ProS type 1 subfamily. Homodimer.

The protein resides in the cytoplasm. It carries out the reaction tRNA(Pro) + L-proline + ATP = L-prolyl-tRNA(Pro) + AMP + diphosphate. Functionally, catalyzes the attachment of proline to tRNA(Pro) in a two-step reaction: proline is first activated by ATP to form Pro-AMP and then transferred to the acceptor end of tRNA(Pro). As ProRS can inadvertently accommodate and process non-cognate amino acids such as alanine and cysteine, to avoid such errors it has two additional distinct editing activities against alanine. One activity is designated as 'pretransfer' editing and involves the tRNA(Pro)-independent hydrolysis of activated Ala-AMP. The other activity is designated 'posttransfer' editing and involves deacylation of mischarged Ala-tRNA(Pro). The misacylated Cys-tRNA(Pro) is not edited by ProRS. This Burkholderia ambifaria (strain MC40-6) protein is Proline--tRNA ligase.